A 155-amino-acid chain; its full sequence is 17.4 kDa class III heat shock protein (155 aa).

In terms of domain architecture, sHSP spans 35–155; it reads GRGSSNNIPI…KPKTVQIAVS (121 aa).

It belongs to the small heat shock protein (HSP20) family. May form oligomeric structures.

The protein resides in the cytoplasm. This chain is 17.4 kDa class III heat shock protein (HSP17.4B), found in Arabidopsis thaliana (Mouse-ear cress).